The sequence spans 162 residues: MSGLTHFDAAGHAHMVDVGDKQETRRIAIARGTIRMLPATFALIRDGKARKGDVLGVARIAAIQGAKRTADLIPLCHPLALTRVAVEFELDDALPGVHCVVQVETFGRTGVEMEALTAVQVGLLTVYDMCKAVDRGMVITDVSVREKRGGKSGDWKAEDAAG.

Residues 75-77 (LCH) and 113-114 (ME) each bind substrate. Asp128 is a catalytic residue.

It belongs to the MoaC family. Homohexamer; trimer of dimers.

The enzyme catalyses (8S)-3',8-cyclo-7,8-dihydroguanosine 5'-triphosphate = cyclic pyranopterin phosphate + diphosphate. It participates in cofactor biosynthesis; molybdopterin biosynthesis. Its function is as follows. Catalyzes the conversion of (8S)-3',8-cyclo-7,8-dihydroguanosine 5'-triphosphate to cyclic pyranopterin monophosphate (cPMP). The sequence is that of Cyclic pyranopterin monophosphate synthase from Burkholderia orbicola (strain MC0-3).